Reading from the N-terminus, the 116-residue chain is MGKYSSCRISNIFIVISKINEENSIYLVSLYYSFSTKCRAISMQEPGISSDSKFFSLFLIIRKVSVASDCRQLYECKKSNENIWEYFKRRLETRLSSFSIILSAVFPDVLFTFLFS.

This is an uncharacterized protein from Saccharomyces cerevisiae (strain ATCC 204508 / S288c) (Baker's yeast).